The following is a 194-amino-acid chain: Peptide deformylase (194 aa).

Residues Asp71 to Val93 form a disordered region. A compositionally biased stretch (basic and acidic residues) spans Glu76–Val93. Fe cation is bound by residues Cys119 and His161. Residue Glu162 is part of the active site. Fe cation is bound at residue His165.

This sequence belongs to the polypeptide deformylase family. Requires Fe(2+) as cofactor.

The enzyme catalyses N-terminal N-formyl-L-methionyl-[peptide] + H2O = N-terminal L-methionyl-[peptide] + formate. Removes the formyl group from the N-terminal Met of newly synthesized proteins. Requires at least a dipeptide for an efficient rate of reaction. N-terminal L-methionine is a prerequisite for activity but the enzyme has broad specificity at other positions. The chain is Peptide deformylase from Erythrobacter litoralis (strain HTCC2594).